The following is a 735-amino-acid chain: Phosphoribosylformylglycinamidine synthase subunit PurL (735 aa).

His50 is a catalytic residue. ATP is bound by residues Tyr53 and Lys92. Glu94 lines the Mg(2+) pocket. Residues 95 to 98 and Arg117 contribute to the substrate site; that span reads SHNH. Catalysis depends on His96, which acts as the Proton acceptor. Asp118 provides a ligand contact to Mg(2+). Residue Gln241 coordinates substrate. Residue Asp269 coordinates Mg(2+). 313–315 contacts substrate; it reads ESQ. Asp495 and Gly532 together coordinate ATP. A Mg(2+)-binding site is contributed by Asn533. Substrate is bound at residue Ser535.

Belongs to the FGAMS family. As to quaternary structure, monomer. Part of the FGAM synthase complex composed of 1 PurL, 1 PurQ and 2 PurS subunits.

It is found in the cytoplasm. It catalyses the reaction N(2)-formyl-N(1)-(5-phospho-beta-D-ribosyl)glycinamide + L-glutamine + ATP + H2O = 2-formamido-N(1)-(5-O-phospho-beta-D-ribosyl)acetamidine + L-glutamate + ADP + phosphate + H(+). It functions in the pathway purine metabolism; IMP biosynthesis via de novo pathway; 5-amino-1-(5-phospho-D-ribosyl)imidazole from N(2)-formyl-N(1)-(5-phospho-D-ribosyl)glycinamide: step 1/2. In terms of biological role, part of the phosphoribosylformylglycinamidine synthase complex involved in the purines biosynthetic pathway. Catalyzes the ATP-dependent conversion of formylglycinamide ribonucleotide (FGAR) and glutamine to yield formylglycinamidine ribonucleotide (FGAM) and glutamate. The FGAM synthase complex is composed of three subunits. PurQ produces an ammonia molecule by converting glutamine to glutamate. PurL transfers the ammonia molecule to FGAR to form FGAM in an ATP-dependent manner. PurS interacts with PurQ and PurL and is thought to assist in the transfer of the ammonia molecule from PurQ to PurL. The sequence is that of Phosphoribosylformylglycinamidine synthase subunit PurL from Bartonella henselae (strain ATCC 49882 / DSM 28221 / CCUG 30454 / Houston 1) (Rochalimaea henselae).